We begin with the raw amino-acid sequence, 460 residues long: Probable carboxylesterase 11 (460 aa).

Polar residues-rich tracts occupy residues 26–35 (QSSGDESSSD) and 132–145 (NSYGYTTGSSSPEA). 2 disordered regions span residues 26 to 52 (QSSGDESSSDPFGVTTRPEESVAAPNP) and 132 to 161 (NSYGYTTGSSSPEAGSSDVYRGYAPSSSGG). An Involved in the stabilization of the negatively charged intermediate by the formation of the oxyanion hole motif is present at residues 173 to 175 (HGG). Residues Ser-289, Asp-392, and His-422 contribute to the active site.

The protein belongs to the 'GDXG' lipolytic enzyme family. As to expression, expressed in roots, leaves, stems, flowers and siliques.

The catalysed reaction is a carboxylic ester + H2O = an alcohol + a carboxylate + H(+). In terms of biological role, carboxylesterase acting on esters with varying acyl chain length. The chain is Probable carboxylesterase 11 (CXE11) from Arabidopsis thaliana (Mouse-ear cress).